The sequence spans 361 residues: D-malate dehydrogenase [decarboxylating] (361 aa).

Asp-224, Asp-248, and Asp-252 together coordinate Mn(2+).

Belongs to the isocitrate and isopropylmalate dehydrogenases family. It depends on Mg(2+) as a cofactor. Mn(2+) serves as cofactor.

The protein localises to the cytoplasm. It carries out the reaction (R)-malate + NAD(+) = pyruvate + CO2 + NADH. Catalyzes the NAD(+)-dependent oxidative decarboxylation of D-malate into pyruvate. Is essential for aerobic growth on D-malate as the sole carbon source. But is not required for anaerobic D-malate utilization, although DmlA is expressed and active in those conditions. Appears to be not able to use L-tartrate as a substrate for dehydrogenation instead of D-malate. The sequence is that of D-malate dehydrogenase [decarboxylating] (dmlA) from Escherichia coli (strain K12).